A 469-amino-acid chain; its full sequence is Probable Xaa-Pro aminopeptidase AN0832 (469 aa).

Asp-260, Asp-271, Glu-398, and Glu-437 together coordinate Mn(2+).

The protein belongs to the peptidase M24B family. Requires Mn(2+) as cofactor.

The catalysed reaction is Release of any N-terminal amino acid, including proline, that is linked to proline, even from a dipeptide or tripeptide.. Catalyzes the removal of a penultimate prolyl residue from the N-termini of peptides. The protein is Probable Xaa-Pro aminopeptidase AN0832 of Emericella nidulans (strain FGSC A4 / ATCC 38163 / CBS 112.46 / NRRL 194 / M139) (Aspergillus nidulans).